A 306-amino-acid polypeptide reads, in one-letter code: MAKASAAIEEFLAMLAAERGAAANTLAAYRRDLEGAEALAGDLATARRPALSRLGSAWSDLAPATVARKASALRQFYGFLVDEGLREDDPSSALPRPTMRRPLPKTLSHKEVERLFEQAEREAETSRPLPVRLLALIELLYGSGLRATELVSLPVAAVPRDAPFLTVTGKGGVARMVPVSGRAREALQSWMGLRGSDSPYLFPSRKAHITRVRLFQMLKELAVRADLNPDKVSPHVLRHAFATHLLEGGADLRVLQTLLGHADISTTQIYTHVDAARLVALVNERHPLSARAAGKRSTLAEKRTED.

Positions 2 to 81 (AKASAAIEEF…ALRQFYGFLV (80 aa)) constitute a Core-binding (CB) domain. In terms of domain architecture, Tyr recombinase spans 102–283 (PLPKTLSHKE…DAARLVALVN (182 aa)). Active-site residues include Arg-146, Lys-170, His-235, Arg-238, and His-261. Tyr-270 (O-(3'-phospho-DNA)-tyrosine intermediate) is an active-site residue.

This sequence belongs to the 'phage' integrase family. XerC subfamily. In terms of assembly, forms a cyclic heterotetrameric complex composed of two molecules of XerC and two molecules of XerD.

It localises to the cytoplasm. Site-specific tyrosine recombinase, which acts by catalyzing the cutting and rejoining of the recombining DNA molecules. The XerC-XerD complex is essential to convert dimers of the bacterial chromosome into monomers to permit their segregation at cell division. It also contributes to the segregational stability of plasmids. The polypeptide is Tyrosine recombinase XerC (Erythrobacter litoralis (strain HTCC2594)).